A 295-amino-acid polypeptide reads, in one-letter code: 2-methylisocitrate lyase (295 aa).

45–47 (SGG) contributes to the substrate binding site. Positions 85 and 87 each coordinate Mg(2+). Residues 123-124 (CG), Arg158, Glu188, 210-212 (NIT), Arg241, and Arg270 each bind substrate.

This sequence belongs to the isocitrate lyase/PEP mutase superfamily. Methylisocitrate lyase family. Homotetramer; dimer of dimers. Requires Mg(2+) as cofactor.

It catalyses the reaction (2S,3R)-3-hydroxybutane-1,2,3-tricarboxylate = pyruvate + succinate. It participates in organic acid metabolism; propanoate degradation. Functionally, involved in the catabolism of short chain fatty acids (SCFA) via the 2-methylcitrate cycle I (propionate degradation route). Catalyzes the thermodynamically favored C-C bond cleavage of (2R,3S)-2-methylisocitrate to yield pyruvate and succinate via an alpha-carboxy-carbanion intermediate. The polypeptide is 2-methylisocitrate lyase (Salmonella typhimurium (strain LT2 / SGSC1412 / ATCC 700720)).